Consider the following 145-residue polypeptide: MYPAHLLVLLAVCVSLLGAASIPPLPLNVAQFDNMIECANYGSRPSWHYMEYGCYCGKEGSGTPVDELDRCCKAHDDCYTEAEKRRCHPKFSAYSWKCGSDGPTCDPETGCKRTVCDCDATAAKCFAKAPFNQANWNIDTETHCQ.

The first 21 residues, 1 to 21, serve as a signal peptide directing secretion; that stretch reads MYPAHLLVLLAVCVSLLGAAS. The propeptide occupies 22 to 27; sequence IPPLPL. 7 cysteine pairs are disulfide-bonded: Cys-38/Cys-98, Cys-54/Cys-144, Cys-56/Cys-72, Cys-71/Cys-125, Cys-78/Cys-118, Cys-87/Cys-111, and Cys-105/Cys-116. The Ca(2+) site is built by Tyr-55 and Gly-57. The active site involves His-75. Residue Asp-76 participates in Ca(2+) binding. The active site involves Asp-119.

The protein belongs to the phospholipase A2 family. Group I subfamily. D49 sub-subfamily. Ca(2+) serves as cofactor. As to expression, expressed by the venom gland.

The protein localises to the secreted. The enzyme catalyses a 1,2-diacyl-sn-glycero-3-phosphocholine + H2O = a 1-acyl-sn-glycero-3-phosphocholine + a fatty acid + H(+). PLA2 catalyzes the calcium-dependent hydrolysis of the 2-acyl groups in 3-sn-phosphoglycerides. This is Acidic phospholipase A2 from Notechis scutatus scutatus (Mainland tiger snake).